Here is a 545-residue protein sequence, read N- to C-terminus: Glucose starvation modulator protein 1 (545 aa).

Positions 20–48 (CGFCHEKHLQCDVGRPCQNCRKRNIASFC) form a DNA-binding region, zn(2)-C6 fungal-type. Positions 51 to 60 (KVKRRRKRKR) are enriched in basic residues. 2 disordered regions span residues 51–131 (KVKR…AMKD) and 228–270 (YISL…WQQQ). The span at 61–71 (SDASNFDKDEA) shows a compositional bias: basic and acidic residues. The span at 72 to 92 (ATQTLNFNTVNPGEGSSSAMT) shows a compositional bias: polar residues. Residues 98 to 110 (TGTTTATTTRTTT) are compositionally biased toward low complexity. The span at 111–125 (NFRSESKASSSTENI) shows a compositional bias: polar residues. Residues 257-270 (QQKESQQMQLWQQQ) are compositionally biased toward low complexity. The PAS domain maps to 416–486 (ELENMSKLVN…DLFHEHLAFG (71 aa)).

The protein belongs to the ERT1/acuK family.

It localises to the nucleus. In terms of biological role, transcription factor which regulates nonfermentable carbon utilization. This is Glucose starvation modulator protein 1 (GSM1) from Zygosaccharomyces rouxii (strain ATCC 2623 / CBS 732 / NBRC 1130 / NCYC 568 / NRRL Y-229).